Reading from the N-terminus, the 92-residue chain is uncharacterized protein (92 aa).

A helical transmembrane segment spans residues 65-86 (AVWIFWLCFLVSGLSRAFLVYF).

The protein resides in the membrane. This is an uncharacterized protein from Treponema pallidum (strain Nichols).